The following is a 347-amino-acid chain: NADH-ubiquinone oxidoreductase chain 2 (347 aa).

10 consecutive transmembrane segments (helical) span residues 1–21 (MNPSIFIILLTTLILGTMMVI), 25–45 (HWLLAWIGFEMNMMAFIPIMM), 59–79 (YLLTQATASALLMMAVIINLM), 96–116 (TLMTVALAIKLGLAPFHFWVP), 122–142 (IPLTTGLILLTWQKLAPLSIL), 149–169 (INLYLMLTMSLLSILVGGWGG), 200–220 (LTLLNLLIYITMTFTMFMLFI), 239–259 (IITTLTMLTLLSMGGLPPLSG), 274–294 (DILIMPTFMAITALLNLYFYM), and 325–345 (LLPTAIVISTMLLPLTPMLSI).

The protein belongs to the complex I subunit 2 family. In terms of assembly, core subunit of respiratory chain NADH dehydrogenase (Complex I) which is composed of 45 different subunits. Interacts with TMEM242.

Its subcellular location is the mitochondrion inner membrane. The catalysed reaction is a ubiquinone + NADH + 5 H(+)(in) = a ubiquinol + NAD(+) + 4 H(+)(out). Functionally, core subunit of the mitochondrial membrane respiratory chain NADH dehydrogenase (Complex I) which catalyzes electron transfer from NADH through the respiratory chain, using ubiquinone as an electron acceptor. Essential for the catalytic activity and assembly of complex I. The chain is NADH-ubiquinone oxidoreductase chain 2 from Balaenoptera musculus (Blue whale).